A 201-amino-acid chain; its full sequence is Cardiotrophin-1 (201 aa).

This sequence belongs to the IL-6 superfamily. In terms of tissue distribution, highly expressed in heart, skeletal muscle, prostate and ovary. Lower levels in lung, kidney, pancreas, thymus, testis and small intestine. Little or no expression in brain, placenta, liver, spleen, colon or peripheral blood leukocytes.

Its subcellular location is the secreted. Its function is as follows. Induces cardiac myocyte hypertrophy in vitro. Binds to and activates the ILST/gp130 receptor. This chain is Cardiotrophin-1 (CTF1), found in Homo sapiens (Human).